The following is a 358-amino-acid chain: Nicotinate-nucleotide--dimethylbenzimidazole phosphoribosyltransferase (358 aa).

Residue Glu323 is the Proton acceptor of the active site.

It belongs to the CobT family.

It carries out the reaction 5,6-dimethylbenzimidazole + nicotinate beta-D-ribonucleotide = alpha-ribazole 5'-phosphate + nicotinate + H(+). Its pathway is nucleoside biosynthesis; alpha-ribazole biosynthesis; alpha-ribazole from 5,6-dimethylbenzimidazole: step 1/2. Its function is as follows. Catalyzes the synthesis of alpha-ribazole-5'-phosphate from nicotinate mononucleotide (NAMN) and 5,6-dimethylbenzimidazole (DMB). The polypeptide is Nicotinate-nucleotide--dimethylbenzimidazole phosphoribosyltransferase (Oleidesulfovibrio alaskensis (strain ATCC BAA-1058 / DSM 17464 / G20) (Desulfovibrio alaskensis)).